Here is a 91-residue protein sequence, read N- to C-terminus: Protein LURE 1.6 (91 aa).

An N-terminal signal peptide occupies residues 1-20; sequence MKLPFIFLITLLIFVSSCTS. 3 cysteine pairs are disulfide-bonded: Cys59–Cys76, Cys62–Cys83, and Cys66–Cys85.

Belongs to the DEFL family. In terms of tissue distribution, expressed in the pistil. Detected in the synergid cells.

Its subcellular location is the secreted. Its function is as follows. Pollen tube attractants guiding pollen tubes to the ovular micropyle. The protein is Protein LURE 1.6 of Arabidopsis thaliana (Mouse-ear cress).